A 395-amino-acid polypeptide reads, in one-letter code: Cystathionine beta-lyase MetC (395 aa).

Lys210 is modified (N6-(pyridoxal phosphate)lysine).

It belongs to the trans-sulfuration enzymes family. Homotetramer; dimer of dimers. It depends on pyridoxal 5'-phosphate as a cofactor.

It is found in the cytoplasm. It catalyses the reaction L,L-cystathionine + H2O = L-homocysteine + pyruvate + NH4(+). It carries out the reaction L-cysteine + H2O = hydrogen sulfide + pyruvate + NH4(+) + H(+). The enzyme catalyses an S-substituted L-cysteine + H2O = a thiol + pyruvate + NH4(+). It participates in amino-acid biosynthesis; L-methionine biosynthesis via de novo pathway; L-homocysteine from L-cystathionine: step 1/1. With respect to regulation, L-cysteine inhibits cystathionine beta-lyase activity competitively. Inhibited by aminoethoxyvinylglycine (AVG). Functionally, primarily catalyzes the cleavage of cystathionine to homocysteine, pyruvate and ammonia during methionine biosynthesis. Also exhibits cysteine desulfhydrase activity, producing sulfide from cysteine. In addition, under certain growth conditions, exhibits significant alanine racemase coactivity. The polypeptide is Cystathionine beta-lyase MetC (Escherichia coli (strain K12)).